Reading from the N-terminus, the 192-residue chain is Orotate phosphoribosyltransferase (192 aa).

5-phospho-alpha-D-ribose 1-diphosphate contacts are provided by residues R84, K88, and 110-118 (DDVLTTGNS). T114 and R142 together coordinate orotate.

The protein belongs to the purine/pyrimidine phosphoribosyltransferase family. PyrE subfamily. As to quaternary structure, homodimer. Requires Mg(2+) as cofactor.

It carries out the reaction orotidine 5'-phosphate + diphosphate = orotate + 5-phospho-alpha-D-ribose 1-diphosphate. The protein operates within pyrimidine metabolism; UMP biosynthesis via de novo pathway; UMP from orotate: step 1/2. Its function is as follows. Catalyzes the transfer of a ribosyl phosphate group from 5-phosphoribose 1-diphosphate to orotate, leading to the formation of orotidine monophosphate (OMP). In Pyrobaculum calidifontis (strain DSM 21063 / JCM 11548 / VA1), this protein is Orotate phosphoribosyltransferase.